A 474-amino-acid polypeptide reads, in one-letter code: Trehalose-6-phosphate synthase (474 aa).

Residue Arg10 participates in D-glucose 6-phosphate binding. Position 22-23 (22-23 (GG)) interacts with UDP-alpha-D-glucose. 2 residues coordinate D-glucose 6-phosphate: Tyr77 and Asp131. Residues Arg263 and Lys268 each coordinate UDP-alpha-D-glucose. Residue Arg301 coordinates D-glucose 6-phosphate. Residues Phe340 and 366–370 (LVAKE) contribute to the UDP-alpha-D-glucose site.

Belongs to the glycosyltransferase 20 family. In terms of assembly, homotetramer.

The enzyme catalyses D-glucose 6-phosphate + UDP-alpha-D-glucose = alpha,alpha-trehalose 6-phosphate + UDP + H(+). The protein operates within glycan biosynthesis; trehalose biosynthesis. Probably involved in the osmoprotection via the biosynthesis of trehalose. Catalyzes the transfer of glucose from UDP-alpha-D-glucose (UDP-Glc) to D-glucose 6-phosphate (Glc-6-P) to form trehalose-6-phosphate. Acts with retention of the anomeric configuration of the UDP-sugar donor. This is Trehalose-6-phosphate synthase from Escherichia coli O1:K1 / APEC.